A 54-amino-acid polypeptide reads, in one-letter code: UPF0391 membrane protein pRL90066 (54 aa).

Helical transmembrane passes span 5-25 (ALVFLVVALIAGVLGFGGIAG) and 28-48 (ASIAQVLFFIFLVLFVVSLVM).

This sequence belongs to the UPF0391 family.

The protein localises to the cell membrane. The sequence is that of UPF0391 membrane protein pRL90066 from Rhizobium johnstonii (strain DSM 114642 / LMG 32736 / 3841) (Rhizobium leguminosarum bv. viciae).